A 475-amino-acid chain; its full sequence is Ribulose bisphosphate carboxylase large chain (475 aa).

Positions 1–2 (MS) are excised as a propeptide. At P3 the chain carries N-acetylproline. K14 is subject to N6,N6,N6-trimethyllysine. Substrate contacts are provided by N123 and T173. K175 functions as the Proton acceptor in the catalytic mechanism. Residue K177 coordinates substrate. The Mg(2+) site is built by K201, D203, and E204. K201 carries the post-translational modification N6-carboxylysine. H294 serves as the catalytic Proton acceptor. Residues R295, H327, and S379 each coordinate substrate.

This sequence belongs to the RuBisCO large chain family. Type I subfamily. Heterohexadecamer of 8 large chains and 8 small chains; disulfide-linked. The disulfide link is formed within the large subunit homodimers. The cofactor is Mg(2+). In terms of processing, the disulfide bond which can form in the large chain dimeric partners within the hexadecamer appears to be associated with oxidative stress and protein turnover.

The protein localises to the plastid. Its subcellular location is the chloroplast. The enzyme catalyses 2 (2R)-3-phosphoglycerate + 2 H(+) = D-ribulose 1,5-bisphosphate + CO2 + H2O. It carries out the reaction D-ribulose 1,5-bisphosphate + O2 = 2-phosphoglycolate + (2R)-3-phosphoglycerate + 2 H(+). Its function is as follows. RuBisCO catalyzes two reactions: the carboxylation of D-ribulose 1,5-bisphosphate, the primary event in carbon dioxide fixation, as well as the oxidative fragmentation of the pentose substrate in the photorespiration process. Both reactions occur simultaneously and in competition at the same active site. This is Ribulose bisphosphate carboxylase large chain from Pinus radiata (Monterey pine).